The following is a 220-amino-acid chain: Metalloproteinase inhibitor 2 (220 aa).

Positions 1 to 26 (MPGAALPSLLAWLAVLLLGRARPADA) are cleaved as a signal peptide. Cys27 contributes to the Zn(2+) binding site. 2 involved in metalloproteinase-binding regions span residues 27 to 30 (CSCS) and 95 to 96 (TE). 6 cysteine pairs are disulfide-bonded: Cys27–Cys98, Cys29–Cys127, Cys39–Cys152, Cys154–Cys201, Cys159–Cys164, and Cys172–Cys193. The region spanning 27–152 (CSCSPIHPQQ…SLNQRYQMGC (126 aa)) is the NTR domain.

This sequence belongs to the protease inhibitor I35 (TIMP) family. The activity of TIMP2 is dependent on the presence of disulfide bonds.

The protein resides in the secreted. Complexes with metalloproteinases (such as collagenases) and irreversibly inactivates them by binding to their catalytic zinc cofactor. In Gallus gallus (Chicken), this protein is Metalloproteinase inhibitor 2 (TIMP2).